The sequence spans 359 residues: Large ribosomal subunit protein uL3 (359 aa).

The interval 336–359 (VRPPAKRPPAEAPQITYISRESKQ) is disordered.

This sequence belongs to the universal ribosomal protein uL3 family. In terms of assembly, part of the 50S ribosomal subunit. Forms a cluster with proteins L14 and L24e.

One of the primary rRNA binding proteins, it binds directly near the 3'-end of the 23S rRNA, where it nucleates assembly of the 50S subunit. The sequence is that of Large ribosomal subunit protein uL3 from Thermococcus sibiricus (strain DSM 12597 / MM 739).